Consider the following 201-residue polypeptide: Adenylyl-sulfate kinase (201 aa).

Position 35–42 (35–42 (GLSGSGKS)) interacts with ATP. The active-site Phosphoserine intermediate is Ser-109.

This sequence belongs to the APS kinase family.

The enzyme catalyses adenosine 5'-phosphosulfate + ATP = 3'-phosphoadenylyl sulfate + ADP + H(+). Its pathway is sulfur metabolism; hydrogen sulfide biosynthesis; sulfite from sulfate: step 2/3. Its function is as follows. Catalyzes the synthesis of activated sulfate. This Salmonella paratyphi A (strain AKU_12601) protein is Adenylyl-sulfate kinase.